The primary structure comprises 190 residues: MSRNENRAALSDVLQALQQEEVIAYPTEAVFGLGCDPDSEKAVNALLALKQRPWQKGLILIAANYEQLKPYVDDSALTDSQRETIFSVWPGPVTWVIPTHPETPRWLTGSFDSLAVRVSDHPLVQQLCSQYGKPLVSTSANLSGQEPCRTIEEVRIQFGSSLPVLAGLVGGRLNPSEIRDALTGKQFRQG.

Residues 7–190 form the YrdC-like domain; sequence RAALSDVLQA…ALTGKQFRQG (184 aa).

This sequence belongs to the SUA5 family. TsaC subfamily.

Its subcellular location is the cytoplasm. The catalysed reaction is L-threonine + hydrogencarbonate + ATP = L-threonylcarbamoyladenylate + diphosphate + H2O. Functionally, required for the formation of a threonylcarbamoyl group on adenosine at position 37 (t(6)A37) in tRNAs that read codons beginning with adenine. Catalyzes the conversion of L-threonine, HCO(3)(-)/CO(2) and ATP to give threonylcarbamoyl-AMP (TC-AMP) as the acyladenylate intermediate, with the release of diphosphate. The polypeptide is Threonylcarbamoyl-AMP synthase (Yersinia enterocolitica serotype O:8 / biotype 1B (strain NCTC 13174 / 8081)).